We begin with the raw amino-acid sequence, 193 residues long: Segregation and condensation protein B (193 aa).

It belongs to the ScpB family. In terms of assembly, homodimer. Homodimerization may be required to stabilize the binding of ScpA to the Smc head domains. Component of a cohesin-like complex composed of ScpA, ScpB and the Smc homodimer, in which ScpA and ScpB bind to the head domain of Smc. The presence of the three proteins is required for the association of the complex with DNA.

Its subcellular location is the cytoplasm. Its function is as follows. Participates in chromosomal partition during cell division. May act via the formation of a condensin-like complex containing Smc and ScpA that pull DNA away from mid-cell into both cell halves. The protein is Segregation and condensation protein B of Shouchella clausii (strain KSM-K16) (Alkalihalobacillus clausii).